A 361-amino-acid polypeptide reads, in one-letter code: Phospho-N-acetylmuramoyl-pentapeptide-transferase (361 aa).

The next 10 membrane-spanning stretches (helical) occupy residues 28 to 48, 74 to 94, 99 to 119, 133 to 153, 168 to 188, 203 to 223, 236 to 256, 263 to 283, 288 to 308, and 338 to 358; these read LAII…IEFL, TMGG…LADL, IWIT…DDYA, SKLL…EYLD, LSLD…VGSS, VPIA…GNLI, TGEL…FLWF, VFMG…ISVI, IVLA…ILQV, and KVVI…LSSL.

Belongs to the glycosyltransferase 4 family. MraY subfamily. Requires Mg(2+) as cofactor.

The protein resides in the cell membrane. The catalysed reaction is UDP-N-acetyl-alpha-D-muramoyl-L-alanyl-gamma-D-glutamyl-meso-2,6-diaminopimeloyl-D-alanyl-D-alanine + di-trans,octa-cis-undecaprenyl phosphate = di-trans,octa-cis-undecaprenyl diphospho-N-acetyl-alpha-D-muramoyl-L-alanyl-D-glutamyl-meso-2,6-diaminopimeloyl-D-alanyl-D-alanine + UMP. Its pathway is cell wall biogenesis; peptidoglycan biosynthesis. Functionally, catalyzes the initial step of the lipid cycle reactions in the biosynthesis of the cell wall peptidoglycan: transfers peptidoglycan precursor phospho-MurNAc-pentapeptide from UDP-MurNAc-pentapeptide onto the lipid carrier undecaprenyl phosphate, yielding undecaprenyl-pyrophosphoryl-MurNAc-pentapeptide, known as lipid I. The polypeptide is Phospho-N-acetylmuramoyl-pentapeptide-transferase (Rickettsia rickettsii).